The sequence spans 467 residues: MNYSLAVDIGASSGRLIVGECNKKIQLTEIHRFENQIIEKNGQFCWDVDALFSEIKTGLKKCREAGIEPVSMGIDTWAVDFVLLDEHDKPLTDAVSYRDPRTDGVMEEVIEQFMKERLYLETGIQFQQFNTIYQLYALKKQHPDIFKKAKSFLMIPDYFHFLLTGKKANEYTNATTTQLVNAFTKKWDKDIIEALGFNPDMFQEIKLPTESLGKLKSEWVEEVGFDLEVILPATHDTGSAVVAVPKVADTIYLSSGTWSLIGVENSFPICVTKALDYNFTNEGGMNYQFRFLKNIMGLWMIQEVRRNYDNRYSFAQLVELSKGISFKSTVDVNDPRFLKPTNMIKEIQRYCQETGQQAPELPGEVAKCVFESLAESYTSAVAEIEDIFEKDFKSINVIGGGCRNELLNQLIADRTKKDVFAGPIEATAIGNLVAQWMALGEIESIQQARKLIYDSFDVKRYVSADRE.

Residue 11-15 coordinates ATP; that stretch reads ASSGR. Substrate is bound by residues alanine 78 and 235–237; that span reads HDT. The active-site Proton acceptor is aspartate 236. Residue threonine 257 participates in ATP binding. Position 294 (asparagine 294) interacts with substrate. Position 302 (glutamine 302) interacts with ATP. A disulfide bridge connects residues cysteine 351 and cysteine 368. Residue glycine 400 coordinates ATP.

Belongs to the rhamnulokinase family. Mg(2+) is required as a cofactor.

The enzyme catalyses L-rhamnulose + ATP = L-rhamnulose 1-phosphate + ADP + H(+). The protein operates within carbohydrate degradation; L-rhamnose degradation; glycerone phosphate from L-rhamnose: step 2/3. Functionally, involved in the catabolism of L-rhamnose (6-deoxy-L-mannose). Catalyzes the transfer of the gamma-phosphate group from ATP to the 1-hydroxyl group of L-rhamnulose to yield L-rhamnulose 1-phosphate. In Halalkalibacterium halodurans (strain ATCC BAA-125 / DSM 18197 / FERM 7344 / JCM 9153 / C-125) (Bacillus halodurans), this protein is Rhamnulokinase.